A 174-amino-acid chain; its full sequence is Solute carrier family 2, facilitated glucose transporter member 4 (174 aa).

Residues 1-19 are Cytoplasmic-facing; sequence QQIGSEDGEPPQQRVTGTL. The tract at residues 2–8 is interaction with SRFBP1; it reads QIGSEDG. Residue S5 is modified to Phosphoserine. The helical transmembrane segment at 20 to 40 threads the bilayer; sequence VLAVFSAVLGSLQFGYNIGVI. Residues 41-76 lie on the Extracellular side of the membrane; the sequence is NAPQKVIEQSYNETWLGRQGPNGPGSIPPGTLTTLW. Residue N52 is glycosylated (N-linked (GlcNAc...) asparagine). A helical transmembrane segment spans residues 77–97; it reads ALSVAIFSVGGMFSSFLLGII. The Cytoplasmic segment spans residues 98 to 114; sequence SQWLGRKKAMLFNNTLA. Residues 115–135 form a helical membrane-spanning segment; that stretch reads VLAGALMGLAKAAASYEMLIL. Residues 136-137 lie on the Extracellular side of the membrane; it reads GR. A helical membrane pass occupies residues 138–158; that stretch reads FLIGAYSGLASGLVPMYVGEI. At 159-166 the chain is on the cytoplasmic side; the sequence is APTHLRGA. Residues 167-174 form a helical membrane-spanning segment; the sequence is LGTLNQLA.

The protein belongs to the major facilitator superfamily. Sugar transporter (TC 2.A.1.1) family. Glucose transporter subfamily. As to quaternary structure, binds to DAXX. Interacts via its N-terminus with SRFBP1. Interacts with NDUFA9. Interacts with TRARG1; the interaction is required for proper SLC2A4 recycling after insulin stimulation. Post-translationally, sumoylated. In terms of processing, palmitoylated. Palmitoylation by ZDHHC7 controls the insulin-dependent translocation of GLUT4 to the plasma membrane.

The protein resides in the cell membrane. Its subcellular location is the endomembrane system. It is found in the cytoplasm. The protein localises to the perinuclear region. It carries out the reaction D-glucose(out) = D-glucose(in). Its function is as follows. Insulin-regulated facilitative glucose transporter, which plays a key role in removal of glucose from circulation. Response to insulin is regulated by its intracellular localization: in the absence of insulin, it is efficiently retained intracellularly within storage compartments in muscle and fat cells. Upon insulin stimulation, translocates from these compartments to the cell surface where it transports glucose from the extracellular milieu into the cell. The protein is Solute carrier family 2, facilitated glucose transporter member 4 of Sus scrofa (Pig).